The chain runs to 965 residues: Collagen alpha-1(I) chain (965 aa).

Pro residues predominate over residues 1-21 (SVPGPMGPSGPRGLPGPPGPG). A disordered region spans residues 1-965 (SVPGPMGPSG…PGPPGPPGPP (965 aa)). Residues Pro-15, Pro-18, Pro-20, Pro-29, Pro-32, Pro-35, Pro-49, Pro-64, Pro-70, Pro-79, and Pro-85 each carry the 4-hydroxyproline modification. Positions 52-66 (NGDDGEAGKPGRPGE) are enriched in basic and acidic residues. A 5-hydroxylysine; alternate modification is found at Lys-88. Lys-88 carries an O-linked (Gal...) hydroxylysine; alternate glycan. Position 94 is a phosphoserine (Ser-94). The segment covering 102–118 (DAGPAGPKGEPGSPGEN) has biased composition (low complexity). Pro-112, Pro-115, Pro-121, Pro-130, Pro-136, Pro-157, Pro-166, Pro-169, Pro-196, Pro-199, Pro-211, Pro-217, Pro-226, Pro-232, Pro-235, and Pro-250 each carry 4-hydroxyproline. The segment covering 136-154 (PGASGPAGARGNDGATGAA) has biased composition (low complexity). Pro residues predominate over residues 156-168 (PPGPTGPAGPPGF). Residues 202 to 241 (AGAAGPAGNPGADGQPGAKGANGAPGIAGAPGFPGARGPS) show a composition bias toward low complexity. Lys-253 carries the 5-hydroxylysine modification. 8 positions are modified to 4-hydroxyproline: Pro-259, Pro-262, Pro-273, Pro-282, Pro-297, Pro-303, Pro-312, and Pro-318. Residues 307–327 (GERGGPGSRGFPGADGAGPKG) show a composition bias toward gly residues. Lys-326 carries the post-translational modification 5-hydroxylysine. 23 positions are modified to 4-hydroxyproline: Pro-335, Pro-344, Pro-350, Pro-356, Pro-365, Pro-368, Pro-377, Pro-386, Pro-392, Pro-404, Pro-413, Pro-422, Pro-425, Pro-443, Pro-460, Pro-466, Pro-472, Pro-480, Pro-492, Pro-501, Pro-509, Pro-515, and Pro-524. The span at 359–385 (KGLTGSPGSPGPDGKTGPPGPAGQDGR) shows a compositional bias: low complexity. The span at 394–413 (ARGQAGVMGFPGPKGAAGEP) shows a compositional bias: low complexity. Residues 472–482 (PGEADLGAPGP) show a composition bias toward low complexity. Lys-536 bears the 5-hydroxylysine mark. Pro-542, Pro-557, and Pro-563 each carry 4-hydroxyproline. Residues 569–583 (SGPSGPAGPTGARGA) show a composition bias toward low complexity. Ser-572 is subject to Phosphoserine. 8 positions are modified to 4-hydroxyproline: Pro-584, Pro-590, Pro-593, Pro-602, Pro-608, Pro-626, Pro-635, and Pro-644. A compositionally biased stretch (low complexity) spans 596–623 (AGFAGPPGADGQPGAKGEPGDAGAKGDA). Positions 625-637 (PPGPAGPTGPPGP) are enriched in pro residues. Lys-647 carries the post-translational modification 5-hydroxylysine. The segment covering 652 to 668 (SAGPPGATGFPGAAGRV) has biased composition (low complexity). A 4-hydroxyproline mark is found at Pro-656 and Pro-662. Position 670 is a 3-hydroxyproline (Pro-670). 4-hydroxyproline occurs at positions 671, 680, 683, 704, 713, 721, 730, 748, 757, 760, 766, 771, 777, 783, 791, and 797. The span at 697–706 (ETGPAGRPGE) shows a compositional bias: low complexity. The segment covering 718–730 (KGSPGADGPAGAP) has biased composition (low complexity). Positions 768–780 (KGPPGPMGPPGLA) are enriched in pro residues. Lys-806 bears the 5-hydroxylysine mark. Residues 815–830 (SGPPGAPGAPGAPGPV) show a composition bias toward pro residues. A 4-hydroxyproline mark is found at Pro-818, Pro-821, and Pro-824. Residues 851–865 (AGPAGARGPAGPQGP) show a composition bias toward low complexity. The segment covering 866–880 (RGDKGETGEQGDRGI) has biased composition (basic and acidic residues). Residue Lys-869 is modified to 5-hydroxylysine. Lys-881 carries the 5-hydroxylysine; alternate modification. O-linked (Gal...) hydroxylysine; alternate glycosylation is present at Lys-881. Pro-896, Pro-899, Pro-917, and Pro-932 each carry 4-hydroxyproline. The segment covering 899 to 932 (PGEQGPSGASGPAGPRGPPGSAGSPGKDGLNGLP) has biased composition (low complexity). A 3-hydroxyproline modification is found at Pro-937. The residue at position 938 (Pro-938) is a 4-hydroxyproline. The span at 950 to 965 (VGPPGPPGPPGPPGPP) shows a compositional bias: pro residues. A 3-hydroxyproline modification is found at Pro-952. The residue at position 953 (Pro-953) is a 4-hydroxyproline. Pro-955 carries the post-translational modification 3-hydroxyproline. Pro-956 is modified (4-hydroxyproline). The residue at position 958 (Pro-958) is a 3-hydroxyproline. A 4-hydroxyproline mark is found at Pro-959, Pro-962, and Pro-965.

It belongs to the fibrillar collagen family. Trimers of one alpha 2(I) and two alpha 1(I) chains. In terms of processing, contains mostly 4-hydroxyproline. Proline residues at the third position of the tripeptide repeating unit (G-X-Y) are hydroxylated in some or all of the chains. Contains 3-hydroxyproline at a few sites. This modification occurs on the first proline residue in the sequence motif Gly-Pro-Hyp, where Hyp is 4-hydroxyproline. Post-translationally, lysine residues at the third position of the tripeptide repeating unit (G-X-Y) are 5-hydroxylated in some or all of the chains. In terms of processing, O-glycosylated on hydroxylated lysine residues. The O-linked glycan consists of a Glc-Gal disaccharide. In terms of tissue distribution, expressed in bones.

It localises to the secreted. The protein localises to the extracellular space. It is found in the extracellular matrix. In terms of biological role, type I collagen is a member of group I collagen (fibrillar forming collagen). The chain is Collagen alpha-1(I) chain from Scelidotherium sp. (strain SLP-2019) (South American ground sloth).